The following is a 314-amino-acid chain: Replication initiation protein (314 aa).

It belongs to the plasmid replication initiation factor family.

In terms of biological role, this protein is probably a specific topoisomerase involved in initiating replication. This protein is specifically required and may be rate-limiting for replication of the plasmid in vivo. The protein is Replication initiation protein (repC) of Staphylococcus aureus.